The primary structure comprises 339 residues: Glycerol-3-phosphate dehydrogenase [NAD(P)+] (339 aa).

4 residues coordinate NADPH: S15, Y16, H36, and K110. K110, G139, and T141 together coordinate sn-glycerol 3-phosphate. An NADPH-binding site is contributed by A143. The sn-glycerol 3-phosphate site is built by K195, D248, S258, R259, and N260. The active-site Proton acceptor is K195. R259 provides a ligand contact to NADPH. NADPH-binding residues include V283 and E285.

The protein belongs to the NAD-dependent glycerol-3-phosphate dehydrogenase family.

It is found in the cytoplasm. The catalysed reaction is sn-glycerol 3-phosphate + NAD(+) = dihydroxyacetone phosphate + NADH + H(+). The enzyme catalyses sn-glycerol 3-phosphate + NADP(+) = dihydroxyacetone phosphate + NADPH + H(+). Its pathway is membrane lipid metabolism; glycerophospholipid metabolism. In terms of biological role, catalyzes the reduction of the glycolytic intermediate dihydroxyacetone phosphate (DHAP) to sn-glycerol 3-phosphate (G3P), the key precursor for phospholipid synthesis. This chain is Glycerol-3-phosphate dehydrogenase [NAD(P)+], found in Cronobacter sakazakii (strain ATCC BAA-894) (Enterobacter sakazakii).